The chain runs to 346 residues: Dihydroorotase (346 aa).

Zn(2+) is bound by residues His-17 and His-19. Residues 19-21 and Asn-45 each bind substrate; that span reads HLR. Positions 103, 140, and 178 each coordinate Zn(2+). N6-carboxylysine is present on Lys-103. His-140 is a binding site for substrate. Leu-223 is a substrate binding site. Asp-251 provides a ligand contact to Zn(2+). Asp-251 is a catalytic residue. Positions 255 and 267 each coordinate substrate.

This sequence belongs to the metallo-dependent hydrolases superfamily. DHOase family. Class II DHOase subfamily. As to quaternary structure, homodimer. Zn(2+) serves as cofactor.

It carries out the reaction (S)-dihydroorotate + H2O = N-carbamoyl-L-aspartate + H(+). Its pathway is pyrimidine metabolism; UMP biosynthesis via de novo pathway; (S)-dihydroorotate from bicarbonate: step 3/3. Its function is as follows. Catalyzes the reversible cyclization of carbamoyl aspartate to dihydroorotate. The sequence is that of Dihydroorotase from Synechococcus sp. (strain RCC307).